We begin with the raw amino-acid sequence, 723 residues long: Delta-like protein 1 (723 aa).

The N-terminal stretch at 1-17 (MGSRCALALAVLSALLC) is a signal peptide. The Extracellular segment spans residues 18 to 545 (QVWSSGVFEL…LEGQGGPFPW (528 aa)). In terms of domain architecture, DSL spans 177–221 (FVCDEHYYGEGCSVFCRPRDDAFGHFTCGERGEKVCNPGWKGPYC). 27 disulfide bridges follow: Cys-179–Cys-188, Cys-192–Cys-204, Cys-212–Cys-221, Cys-226–Cys-237, Cys-230–Cys-243, Cys-245–Cys-254, Cys-257–Cys-268, Cys-263–Cys-274, Cys-276–Cys-285, Cys-292–Cys-304, Cys-298–Cys-314, Cys-316–Cys-325, Cys-332–Cys-343, Cys-337–Cys-352, Cys-354–Cys-363, Cys-370–Cys-381, Cys-375–Cys-391, Cys-393–Cys-402, Cys-409–Cys-420, Cys-414–Cys-429, Cys-431–Cys-440, Cys-447–Cys-458, Cys-452–Cys-467, Cys-469–Cys-478, Cys-485–Cys-496, Cys-490–Cys-505, and Cys-507–Cys-516. 3 EGF-like domains span residues 226–254 (CLPGCDEQHGFCDKPGECKCRVGWQGRYC), 257–285 (CIRYPGCLHGTCQQPWQCNCQEGWGGLFC), and 292–325 (CTHHKPCKNGATCTNTGQGSYTCSCRPGYTGATC). One can recognise an EGF-like 4; calcium-binding domain in the interval 332–363 (CDPSPCKNGGSCTDLENSYSCTCPPGFYGKIC). EGF-like domains lie at 370–402 (CADGPCFNGGRCSDSPDGGYSCRCPVGYSGFNC) and 409–440 (CSSSPCSNGAKCVDLGDAYLCRCQAGFSGRHC). Residues 447-478 (CASSPCANGGTCRDGVNDFSCTCPPGYTGRNC) form the EGF-like 7; calcium-binding domain. Residue Asn-477 is glycosylated (N-linked (GlcNAc...) asparagine). The EGF-like 8 domain occupies 485–516 (CEHAPCHNGATCHERGHRYVCECARGYGGPNC). Residues 546–568 (VAVCAGVILVLMLLLGCAAVVVC) form a helical membrane-spanning segment. Residues 569–723 (VRLRLQKHRP…KDECVIATEV (155 aa)) lie on the Cytoplasmic side of the membrane. Lys-613 is covalently cross-linked (Glycyl lysine isopeptide (Lys-Gly) (interchain with G-Cter in ubiquitin)). Positions 653 to 664 (AVRDAHSKRDTK) are enriched in basic and acidic residues. The tract at residues 653 to 702 (AVRDAHSKRDTKCQPQGSSGEEKGTPTTLRGGEASERKRPDSGCSTSKDT) is disordered. Ser-694 is subject to Phosphoserine; by PKB. At Ser-697 the chain carries Phosphoserine. The segment at 720–723 (ATEV) is interaction with MAGI1.

In terms of assembly, homodimer. Interacts with TJP1. Interacts with MAGI1 (via PDZ domain); forms a complex with CTNNB1 and CDH2 and promotes recruitment to the adherens junction and stabilization on the cell surface. Interacts with PSEN1; undergoes a presenilin-dependent gamma-secretase cleavage that releases a Dll1-intracellular form. Interacts with MFAP5. Interacts with MIB1. Interacts with NEURL1B; leads to ubiquitination. Interacts with NEURL1. Interacts with SYNJ2BP; enhances DLL1 protein stability, and promotes Notch signaling in endothelial cells. Interacts with MAGI1, MAGI2, MAGI3 and MPDZ. Interacts (via ubiquitin) with EPN1 (via IUM domain); binding with NOTCH1 attached to neighboring cell, promotes ligand ubiquitination and EPN1 interaction, leading to NECD transendocytosis and Notch signaling. Interacts with NOTCH1. Interacts with NOTCH2NLB; leading to promote Notch signaling pathway in a cell-autonomous manner through inhibition of cis DLL1-NOTCH2 interactions. In terms of processing, ubiquitinated by MIB (MIB1 or MIB2), leading to its endocytosis and subsequent degradation. Ubiquitinated; promotes recycling back to the plasma membrane and confers a strong affinity for NOTCH1. Multi-ubiquitination of Lys-613 by MIB1 promotes both cis and trans-interaction with NOTCH1, as well as activation of Notch signaling. Ubiquitinated by NEURL1B. Post-translationally, phosphorylated in a membrane association-dependent manner. Phosphorylation at Ser-697 requires the presence of Ser-694, whereas phosphorylation at Ser-694 occurs independently of the other site. Phosphorylation is required for full ligand activity in vitro and affects surface presentation, ectodomain shedding, and endocytosis. O-fucosylated. Can be elongated to a disaccharide by MFNG. Expressed in heart and pancreas, with lower expression in brain and muscle and almost no expression in placenta, lung, liver and kidney.

It is found in the apical cell membrane. Its subcellular location is the cell junction. The protein localises to the adherens junction. It localises to the membrane raft. Transmembrane ligand protein of NOTCH1, NOTCH2 and NOTCH3 receptors that binds the extracellular domain (ECD) of Notch receptor in a cis and trans fashion manner. Following transinteraction, ligand cells produce mechanical force that depends of a clathrin-mediated endocytosis, requiring ligand ubiquitination, EPN1 interaction, and actin polymerisation; these events promote Notch receptor extracellular domain (NECD) transendocytosis and triggers Notch signaling through induction of cleavage, hyperphosphorylation, and nuclear accumulation of the intracellular domain of Notch receptors (NICD). Is required for embryonic development and maintenance of adult stem cells in many different tissues and immune systeme; the DLL1-induced Notch signaling is mediated through an intercellular communication that regulates cell lineage, cell specification, cell patterning and morphogenesis through effects on differentiation and proliferation. Plays a role in brain development at different level, namely by regulating neuronal differentiation of neural precursor cells via cell-cell interaction, most likely through the lateral inhibitory system in an endogenous level dependent-manner. During neocortex development, Dll1-Notch signaling transmission is mediated by dynamic interactions between intermediate neurogenic progenitors and radial glia; the cell-cell interactions are mediated via dynamic and transient elongation processes, likely to reactivate/maintain Notch activity in neighboring progenitors, and coordinate progenitor cell division and differentiation across radial and zonal boundaries. During cerebellar development, regulates Bergmann glial monolayer formation and its morphological maturation through a Notch signaling pathway. At the retina and spinal cord level, regulates neurogenesis by preventing the premature differentiation of neural progenitors and also by maintaining progenitors in spinal cord through Notch signaling pathway. Also controls neurogenesis of the neural tube in a progenitor domain-specific fashion along the dorsoventral axis. Maintains quiescence of neural stem cells and plays a role as a fate determinant that segregates asymmetrically to one daughter cell during neural stem cells mitosis, resulting in neuronal differentiation in Dll1-inheriting cell. Plays a role in immune systeme development, namely the development of all T-cells and marginal zone (MZ) B-cells. Blocks the differentiation of progenitor cells into the B-cell lineage while promoting the emergence of a population of cells with the characteristics of a T-cell/NK-cell precursor. Also plays a role during muscle development. During early development, inhibits myoblasts differentiation from the medial dermomyotomal lip and later regulates progenitor cell differentiation. Directly modulates cell adhesion and basal lamina formation in satellite cells through Notch signaling. Maintains myogenic progenitors pool by suppressing differentiation through down-regulation of MYOD1 and is required for satellite cell homing and PAX7 expression. During craniofacial and trunk myogenesis suppresses differentiation of cranial mesoderm-derived and somite-derived muscle via MYOD1 regulation but in cranial mesoderm-derived progenitors, is neither required for satellite cell homing nor for PAX7 expression. Also plays a role during pancreatic cell development. During type B pancreatic cell development, may be involved in the initiation of proximodistal patterning in the early pancreatic epithelium. Stimulates multipotent pancreatic progenitor cells proliferation and pancreatic growth by maintaining HES1 expression and PTF1A protein levels. During fetal stages of development, is required to maintain arterial identity and the responsiveness of arterial endothelial cells for VEGFA through regulation of KDR activation and NRP1 expression. Controls sprouting angiogenesis and subsequent vertical branch formation through regulation on tip cell differentiation. Negatively regulates goblet cell differentiation in intestine and controls secretory fat commitment through lateral inhibition in small intestine. Plays a role during inner ear development; negatively regulates auditory hair cell differentiation. Plays a role during nephron development through Notch signaling pathway. Regulates growth, blood pressure and energy homeostasis. In Homo sapiens (Human), this protein is Delta-like protein 1.